The primary structure comprises 326 residues: GTP 3',8-cyclase (326 aa).

A Radical SAM core domain is found at 7-232; it reads GFGRSFPYLR…PRAADAGPAR (226 aa). Residue Arg16 coordinates GTP. [4Fe-4S] cluster contacts are provided by Cys23 and Cys27. Residue Tyr29 coordinates S-adenosyl-L-methionine. Residue Cys30 coordinates [4Fe-4S] cluster. A GTP-binding site is contributed by Arg65. Residue Gly69 participates in S-adenosyl-L-methionine binding. Thr96 serves as a coordination point for GTP. An S-adenosyl-L-methionine-binding site is contributed by Ser120. Lys157 is a binding site for GTP. Position 191 (Met191) interacts with S-adenosyl-L-methionine. Residues Cys254 and Cys257 each contribute to the [4Fe-4S] cluster site. A GTP-binding site is contributed by 259 to 261; sequence RLR. Residue Cys271 coordinates [4Fe-4S] cluster.

It belongs to the radical SAM superfamily. MoaA family. As to quaternary structure, monomer and homodimer. [4Fe-4S] cluster serves as cofactor.

It catalyses the reaction GTP + AH2 + S-adenosyl-L-methionine = (8S)-3',8-cyclo-7,8-dihydroguanosine 5'-triphosphate + 5'-deoxyadenosine + L-methionine + A + H(+). Its pathway is cofactor biosynthesis; molybdopterin biosynthesis. Its function is as follows. Catalyzes the cyclization of GTP to (8S)-3',8-cyclo-7,8-dihydroguanosine 5'-triphosphate. The chain is GTP 3',8-cyclase from Stenotrophomonas maltophilia (strain R551-3).